The sequence spans 366 residues: Histone-lysine N-methyltransferase SETD7 (366 aa).

MORN repeat units follow at residues 36-58 (FEGNFVHGEKNGRGKFFFFDGST), 59-81 (LEGYYVDDALQGQGVYTYEDGGV), and 106-128 (FKGQYKDNNRHGVCWIHYPDGGS). Residues 214–336 (ERVYVADSLI…AEEELTVAYG (123 aa)) form the SET domain. S-adenosyl-L-methionine-binding positions include 226 to 228 (AGE), asparagine 296, histidine 297, and glutamate 356.

This sequence belongs to the class V-like SAM-binding methyltransferase superfamily. Histone-lysine methyltransferase family. SET7 subfamily. Interacts with IPF1/PDX-1.

It is found in the nucleus. Its subcellular location is the chromosome. The enzyme catalyses L-lysyl(4)-[histone H3] + S-adenosyl-L-methionine = N(6)-methyl-L-lysyl(4)-[histone H3] + S-adenosyl-L-homocysteine + H(+). It carries out the reaction L-lysyl-[protein] + S-adenosyl-L-methionine = N(6)-methyl-L-lysyl-[protein] + S-adenosyl-L-homocysteine + H(+). Its function is as follows. Histone methyltransferase that specifically monomethylates 'Lys-4' of histone H3. H3 'Lys-4' methylation represents a specific tag for epigenetic transcriptional activation. Plays a central role in the transcriptional activation of genes such as collagenase or insulin. Recruited by IPF1/PDX-1 to the insulin promoter, leading to activate transcription. Also has methyltransferase activity toward non-histone proteins such as CGAS, p53/TP53, TAF10, and possibly TAF7 by recognizing and binding the [KR]-[STA]-K in substrate proteins. Monomethylates 'Lys-189' of TAF10, leading to increase the affinity of TAF10 for RNA polymerase II. Monomethylates 'Lys-372' of p53/TP53, stabilizing p53/TP53 and increasing p53/TP53-mediated transcriptional activation. Monomethylates 'Lys-491' of CGAS, promoting interaction between SGF29 and CGAS. This is Histone-lysine N-methyltransferase SETD7 (Setd7) from Mus musculus (Mouse).